Consider the following 288-residue polypeptide: Pantothenate synthetase (288 aa).

ATP is bound at residue 30–37 (MGFLHEGH). The active-site Proton donor is His-37. (R)-pantoate is bound at residue Gln-61. Gln-61 serves as a coordination point for beta-alanine. 147–150 (GMKD) lines the ATP pocket. Gln-153 provides a ligand contact to (R)-pantoate. Position 184–187 (184–187 (KSSR)) interacts with ATP.

It belongs to the pantothenate synthetase family. In terms of assembly, homodimer.

The protein localises to the cytoplasm. The enzyme catalyses (R)-pantoate + beta-alanine + ATP = (R)-pantothenate + AMP + diphosphate + H(+). The protein operates within cofactor biosynthesis; (R)-pantothenate biosynthesis; (R)-pantothenate from (R)-pantoate and beta-alanine: step 1/1. Catalyzes the condensation of pantoate with beta-alanine in an ATP-dependent reaction via a pantoyl-adenylate intermediate. In Bacillus licheniformis (strain ATCC 14580 / DSM 13 / JCM 2505 / CCUG 7422 / NBRC 12200 / NCIMB 9375 / NCTC 10341 / NRRL NRS-1264 / Gibson 46), this protein is Pantothenate synthetase.